The chain runs to 335 residues: Glyceraldehyde-3-phosphate dehydrogenase (335 aa).

NAD(+)-binding positions include 12–13 (RI), Asp34, and Lys79. D-glyceraldehyde 3-phosphate-binding positions include 150–152 (SCT), Thr181, 210–211 (TG), and Arg233. Cys151 acts as the Nucleophile in catalysis. Asn315 contributes to the NAD(+) binding site.

Belongs to the glyceraldehyde-3-phosphate dehydrogenase family. Homotetramer.

It is found in the cytoplasm. The enzyme catalyses D-glyceraldehyde 3-phosphate + phosphate + NAD(+) = (2R)-3-phospho-glyceroyl phosphate + NADH + H(+). The protein operates within carbohydrate degradation; glycolysis; pyruvate from D-glyceraldehyde 3-phosphate: step 1/5. This chain is Glyceraldehyde-3-phosphate dehydrogenase (GPD), found in Debaryomyces hansenii (strain ATCC 36239 / CBS 767 / BCRC 21394 / JCM 1990 / NBRC 0083 / IGC 2968) (Yeast).